The primary structure comprises 549 residues: MGTDITATSEWQALARHRDEIGETNLRQLFADDAARGLRFAVTVGGLYIDYSKHRVTAETLNLLVDVARAAGLETKRDAMFSGEHINTSEDRAVLHTALRLPRDAALTVDGQDVVADVHEVLDRMGDFTDRLRSGDWLGATGERITTVVNIGIGGSDLGPVMVDQALRHYADAGISARFVSNVDPADLVAKLAGLNPATTLFVIASKTFSTLETLTNATAARRWLIEALGEDAVSKHFVAVSTNAKLVAEFGIDTDNMFGFWDWVGGRYSVDSAIGLSVMAVIGRERFAEFLAGFHLIDEHFRTAPLEANAPVLLGLIGLWYNNFFGAETRAVLPYSNDLARFAAYLQQLTMESNGKSVQADGTPVSTATGEIFWGEPGTNGQHAFYQLLHQGTRLVPADFIGFSEPTDDLPTADGTGSMHDLLMSNFFAQTQVLAFGKTADEISAEGTSPDVVPHKVMPGNRPTTSILATKLTPSVVGQLIALYEHQVFVEGVIWGIDSFDQWGVELGKTQAKALLPVLTDAEPPAAQSDSSTDALVRRYRSERGRTA.

Glu353 serves as the catalytic Proton donor. Active-site residues include His384 and Lys510. A disordered region spans residues 523–549; that stretch reads AEPPAAQSDSSTDALVRRYRSERGRTA. The span at 537–549 shows a compositional bias: basic and acidic residues; that stretch reads LVRRYRSERGRTA.

The protein belongs to the GPI family.

Its subcellular location is the cytoplasm. It catalyses the reaction alpha-D-glucose 6-phosphate = beta-D-fructose 6-phosphate. It participates in carbohydrate biosynthesis; gluconeogenesis. It functions in the pathway carbohydrate degradation; glycolysis; D-glyceraldehyde 3-phosphate and glycerone phosphate from D-glucose: step 2/4. Functionally, catalyzes the reversible isomerization of glucose-6-phosphate to fructose-6-phosphate. The protein is Glucose-6-phosphate isomerase of Mycolicibacterium gilvum (strain PYR-GCK) (Mycobacterium gilvum (strain PYR-GCK)).